Consider the following 92-residue polypeptide: Small ribosomal subunit protein uS19 (92 aa).

The protein belongs to the universal ribosomal protein uS19 family.

Functionally, protein S19 forms a complex with S13 that binds strongly to the 16S ribosomal RNA. The chain is Small ribosomal subunit protein uS19 from Nostoc punctiforme (strain ATCC 29133 / PCC 73102).